An 89-amino-acid polypeptide reads, in one-letter code: Small ribosomal subunit protein uS19 (89 aa).

It belongs to the universal ribosomal protein uS19 family.

Its function is as follows. Protein S19 forms a complex with S13 that binds strongly to the 16S ribosomal RNA. In Azobacteroides pseudotrichonymphae genomovar. CFP2, this protein is Small ribosomal subunit protein uS19.